A 378-amino-acid polypeptide reads, in one-letter code: UDP-N-acetylenolpyruvoylglucosamine reductase (378 aa).

The FAD-binding PCMH-type domain occupies 15 to 185 (VGGTPERLLE…LSVDLELADH (171 aa)). Arginine 163 is an active-site residue. Serine 248 serves as the catalytic Proton donor. The active site involves glutamate 370.

This sequence belongs to the MurB family. The cofactor is FAD.

It is found in the cytoplasm. The enzyme catalyses UDP-N-acetyl-alpha-D-muramate + NADP(+) = UDP-N-acetyl-3-O-(1-carboxyvinyl)-alpha-D-glucosamine + NADPH + H(+). Its pathway is cell wall biogenesis; peptidoglycan biosynthesis. Cell wall formation. The chain is UDP-N-acetylenolpyruvoylglucosamine reductase from Leifsonia xyli subsp. xyli (strain CTCB07).